A 204-amino-acid chain; its full sequence is FMN-dependent NADH:quinone oxidoreductase (204 aa).

Residues Ser10 and 15–17 (SLS) each bind FMN.

It belongs to the azoreductase type 1 family. As to quaternary structure, homodimer. Requires FMN as cofactor.

It carries out the reaction 2 a quinone + NADH + H(+) = 2 a 1,4-benzosemiquinone + NAD(+). The enzyme catalyses N,N-dimethyl-1,4-phenylenediamine + anthranilate + 2 NAD(+) = 2-(4-dimethylaminophenyl)diazenylbenzoate + 2 NADH + 2 H(+). Quinone reductase that provides resistance to thiol-specific stress caused by electrophilic quinones. Functionally, also exhibits azoreductase activity. Catalyzes the reductive cleavage of the azo bond in aromatic azo compounds to the corresponding amines. This chain is FMN-dependent NADH:quinone oxidoreductase, found in Rhizobium johnstonii (strain DSM 114642 / LMG 32736 / 3841) (Rhizobium leguminosarum bv. viciae).